A 143-amino-acid polypeptide reads, in one-letter code: Late embryogenesis abundant protein 1 (143 aa).

Residues 1 to 17 (MSSQQNQNRQGEQQEQG) are compositionally biased toward low complexity. The tract at residues 1-143 (MSSQQNQNRQ…QAGEKVKGRD (143 aa)) is disordered. 4 consecutive repeat copies span residues 47-57 (KTAEFRDSAGE), 69-79 (KGQEFKERAGE), 80-90 (KAEETKQRAGE), and 91-101 (KMDETKQRAGE). Composition is skewed to basic and acidic residues over residues 47-60 (KTAE…ETIR) and 69-143 (KGQE…KGRD). The interval 47 to 101 (KTAEFRDSAGETIRDLTGQAQEKGQEFKERAGEKAEETKQRAGEKMDETKQRAGE) is 4 X 11 AA approximate repeats.

The protein belongs to the LEA type 4 family.

Its function is as follows. May be involved in defense against water stress. The sequence is that of Late embryogenesis abundant protein 1 from Aphelenchoides avenae (Mycophagous nematode worm).